The chain runs to 88 residues: Small ribosomal subunit protein bS16 (88 aa).

Belongs to the bacterial ribosomal protein bS16 family.

The polypeptide is Small ribosomal subunit protein bS16 (Sorangium cellulosum (strain So ce56) (Polyangium cellulosum (strain So ce56))).